Consider the following 429-residue polypeptide: L-dopachrome tautomerase yellow-f (429 aa).

The first 23 residues, 1–23, serve as a signal peptide directing secretion; the sequence is MLSLDVLLLCAISGFQLLISADG. Residues Asn-133 and Asn-372 are each glycosylated (N-linked (GlcNAc...) asparagine).

Belongs to the major royal jelly protein family.

It localises to the secreted. It catalyses the reaction L-dopachrome = 5,6-dihydroxyindole-2-carboxylate. The protein operates within pigment biosynthesis; melanin biosynthesis. Tautomerization of L-dopachrome with decarboxylation to give 5,6-dihydroxyindole (DHI). Also catalyzes the tautomerization of the methyl ester of L-dopachrome and dopamine chrome. May play a role in melanization reactions during late pupal and adult stages. May play a role in melanization reactions during larval and early pupal stages. The protein is L-dopachrome tautomerase yellow-f of Drosophila melanogaster (Fruit fly).